The chain runs to 594 residues: UvrABC system protein C (594 aa).

The region spanning 15-92 (DKPGCYQMKN…IQKFQPYYNI (78 aa)) is the GIY-YIG domain. The region spanning 197-232 (AKIKQSLQTKMQKASEAMEFERAADIRDQIHYIEVT) is the UVR domain.

This sequence belongs to the UvrC family. In terms of assembly, interacts with UvrB in an incision complex.

The protein resides in the cytoplasm. Functionally, the UvrABC repair system catalyzes the recognition and processing of DNA lesions. UvrC both incises the 5' and 3' sides of the lesion. The N-terminal half is responsible for the 3' incision and the C-terminal half is responsible for the 5' incision. In Pediococcus pentosaceus (strain ATCC 25745 / CCUG 21536 / LMG 10740 / 183-1w), this protein is UvrABC system protein C.